The sequence spans 433 residues: V-type ATP synthase beta chain (433 aa).

The protein belongs to the ATPase alpha/beta chains family.

Functionally, produces ATP from ADP in the presence of a proton gradient across the membrane. The V-type beta chain is a regulatory subunit. The protein is V-type ATP synthase beta chain of Borrelia turicatae (strain 91E135).